The primary structure comprises 362 residues: Probable dual-specificity RNA methyltransferase RlmN (362 aa).

The active-site Proton acceptor is Glu105. The region spanning 111–344 (HEYGNSICVT…VTIRREQGHD (234 aa)) is the Radical SAM core domain. Cys118 and Cys349 form a disulfide bridge. 3 residues coordinate [4Fe-4S] cluster: Cys125, Cys129, and Cys132. Residues 175 to 176 (GE), Ser207, 230 to 232 (SLH), and Asn306 contribute to the S-adenosyl-L-methionine site. Catalysis depends on Cys349, which acts as the S-methylcysteine intermediate.

It belongs to the radical SAM superfamily. RlmN family. [4Fe-4S] cluster serves as cofactor.

The protein resides in the cytoplasm. It catalyses the reaction adenosine(2503) in 23S rRNA + 2 reduced [2Fe-2S]-[ferredoxin] + 2 S-adenosyl-L-methionine = 2-methyladenosine(2503) in 23S rRNA + 5'-deoxyadenosine + L-methionine + 2 oxidized [2Fe-2S]-[ferredoxin] + S-adenosyl-L-homocysteine. The enzyme catalyses adenosine(37) in tRNA + 2 reduced [2Fe-2S]-[ferredoxin] + 2 S-adenosyl-L-methionine = 2-methyladenosine(37) in tRNA + 5'-deoxyadenosine + L-methionine + 2 oxidized [2Fe-2S]-[ferredoxin] + S-adenosyl-L-homocysteine. Functionally, specifically methylates position 2 of adenine 2503 in 23S rRNA and position 2 of adenine 37 in tRNAs. The chain is Probable dual-specificity RNA methyltransferase RlmN from Bacillus cereus (strain B4264).